A 150-amino-acid polypeptide reads, in one-letter code: MSEIMTKNMARNVFYGGSIFFILIFGALTVHSHIYARTKAVDESQLTPSVVEGKHIWERNACIDCHTLLGEGAYFAPELGNVMKRWGVQDDPDSAFETLKGWMESMPTGIEGRRQMPRFDLTDEEFRALSDFLLWTGTINTQNWPPNDAG.

A helical; Signal-anchor transmembrane segment spans residues 13–29 (VFYGGSIFFILIFGALT). Residues Cys-62, Cys-65, and His-66 each contribute to the heme c site.

As to quaternary structure, heterodimer of cytochromes b (large subunit) and c (small subunit).

The protein resides in the cell membrane. Its function is as follows. Component of the anaerobic respiratory chain that transforms nitrate to dinitrogen (denitrification). The polypeptide is Nitric oxide reductase subunit C (norC) (Paracoccus denitrificans).